A 194-amino-acid chain; its full sequence is dCTP deaminase (194 aa).

DCTP-binding positions include Arg-110 to Arg-115, Asp-128, Val-136 to Glu-138, Tyr-171, Lys-178, and Gln-182. Residue Glu-138 is the Proton donor/acceptor of the active site. The interval Arg-169–Asn-194 is disordered. Basic and acidic residues predominate over residues Pro-170–Asp-181. A compositionally biased stretch (polar residues) spans Gln-182–Asn-194.

Belongs to the dCTP deaminase family. Homotrimer.

It carries out the reaction dCTP + H2O + H(+) = dUTP + NH4(+). Its pathway is pyrimidine metabolism; dUMP biosynthesis; dUMP from dCTP (dUTP route): step 1/2. Functionally, catalyzes the deamination of dCTP to dUTP. This Marinomonas sp. (strain MWYL1) protein is dCTP deaminase.